Reading from the N-terminus, the 324-residue chain is Glutathione synthetase (324 aa).

The ATP-grasp domain occupies 133 to 317 (KMYALQFTKA…LAHQVIQWVE (185 aa)). Residue 159–215 (VEAKGATVLKPLGNKAGEGILFLQAGDRNFNSIVELSTQQGRLPVMVQTYLPEAKEG) participates in ATP binding. Positions 288 and 290 each coordinate Mg(2+).

This sequence belongs to the prokaryotic GSH synthase family. It depends on Mg(2+) as a cofactor. The cofactor is Mn(2+).

It catalyses the reaction gamma-L-glutamyl-L-cysteine + glycine + ATP = glutathione + ADP + phosphate + H(+). Its pathway is sulfur metabolism; glutathione biosynthesis; glutathione from L-cysteine and L-glutamate: step 2/2. This Nostoc sp. (strain PCC 7120 / SAG 25.82 / UTEX 2576) protein is Glutathione synthetase.